The sequence spans 497 residues: uncharacterized protein (497 aa).

The segment covering 44-74 (IRQEKEMKRHDDDGRQYQSDRKFAKSKHDDI) has biased composition (basic and acidic residues). Disordered regions lie at residues 44–95 (IRQE…SVGR), 120–151 (VSRSSSIGHSGSTAPWSSVGRHNRKKDNEHRD), and 195–227 (GNVITPGVTSTTGAPSGKASLSRAASNSSTSAR). The span at 120–131 (VSRSSSIGHSGS) shows a compositional bias: low complexity. A phosphoserine mark is found at serine 123, serine 125, and serine 131. A Phosphothreonine modification is found at threonine 132. Over residues 213–227 (ASLSRAASNSSTSAR) the composition is skewed to low complexity. At threonine 258 the chain carries Phosphothreonine. At serine 310 the chain carries Phosphoserine. The segment covering 367–385 (NVNPSNQDLASVKQPSGFS) has biased composition (polar residues). Residues 367-497 (NVNPSNQDLA…GFPDTSRPPH (131 aa)) form a disordered region. Residues 400–409 (NFSNDDSSFF) show a composition bias toward low complexity. Serine 436 carries the post-translational modification Phosphoserine. Over residues 448–472 (GLSSGASIPSAPPGFGYQQPSFPYS) the composition is skewed to low complexity.

It is found in the cytoplasm. Its subcellular location is the nucleus. This is an uncharacterized protein from Schizosaccharomyces pombe (strain 972 / ATCC 24843) (Fission yeast).